The primary structure comprises 267 residues: Tryptophan synthase alpha chain (267 aa).

Active-site proton acceptor residues include E43 and D54.

This sequence belongs to the TrpA family. Tetramer of two alpha and two beta chains.

The enzyme catalyses (1S,2R)-1-C-(indol-3-yl)glycerol 3-phosphate + L-serine = D-glyceraldehyde 3-phosphate + L-tryptophan + H2O. Its pathway is amino-acid biosynthesis; L-tryptophan biosynthesis; L-tryptophan from chorismate: step 5/5. Functionally, the alpha subunit is responsible for the aldol cleavage of indoleglycerol phosphate to indole and glyceraldehyde 3-phosphate. The chain is Tryptophan synthase alpha chain from Bacillus subtilis (strain 168).